The chain runs to 395 residues: Probable isocitrate dehydrogenase [NAD] gamma 2, mitochondrial (395 aa).

The transit peptide at 1-25 (MLAAGSCSVRTILQPALLLGHSREV) directs the protein to the mitochondrion. T117 contacts citrate. Substrate-binding residues include R133, R164, and D251. Mn(2+) is bound at residue D251. N321 lines the ADP pocket.

Belongs to the isocitrate and isopropylmalate dehydrogenases family. Heterooligomer of subunits alpha (IDH3A), beta (IDH3B), and gamma (IDH3G) in the apparent ratio of 2:1:1. The heterodimer containing one IDH3A and one IDH3B subunit and the heterodimer containing one IDH3A and one IDH3G subunit assemble into a heterotetramer (which contains two subunits of IDH3A, one of IDH3B and one of IDH3G) and further into the heterooctamer. Mg(2+) serves as cofactor. The cofactor is Mn(2+).

It localises to the mitochondrion. The heterotetramer and the heterodimer composed of IDH3A and IDH3G subunits can be allosterically activated by citrate (CIT) or/and ADP, and the two activators can act independently or synergistically. The heterodimer composed of IDH3A and IDH3B subunits cannot be allosterically regulated and the allosteric regulation of the heterotetramer is through the IDH3G subunit and not the IDH3B subunit. The IDH3G subunit contains the allosteric site which consists of a CIT-binding site and an ADP-binding site, and the binding of CIT and ADP causes conformational changes at the allosteric site which are transmitted to the active site in the catalytic subunit (IDH3A) through a cascade of conformational changes at the heterodimer interface, leading to stabilization of the isocitrate-binding at the active site and thus activation of the enzyme. ATP can activate the heterotetramer and the heterodimer composed of IDH3A and IDH3G subunits at low concentrations but inhibits their activities at high concentrations, whereas ATP exhibits only inhibitory effect on the heterodimer composed of IDH3A and IDH3B subunits. Regulatory subunit which plays a role in the allosteric regulation of the enzyme catalyzing the decarboxylation of isocitrate (ICT) into alpha-ketoglutarate. The heterodimer composed of the alpha (IDH3A) and beta (IDH3B) subunits and the heterodimer composed of the alpha (IDH3A) and gamma (IDH3G) subunits, have considerable basal activity but the full activity of the heterotetramer (containing two subunits of IDH3A, one of IDH3B and one of IDH3G) requires the assembly and cooperative function of both heterodimers. This is Probable isocitrate dehydrogenase [NAD] gamma 2, mitochondrial from Rattus norvegicus (Rat).